The sequence spans 387 residues: tRNA pseudouridine synthase B (387 aa).

The active-site Nucleophile is Asp-43.

The protein belongs to the pseudouridine synthase TruB family. Type 1 subfamily.

It catalyses the reaction uridine(55) in tRNA = pseudouridine(55) in tRNA. Its function is as follows. Responsible for synthesis of pseudouridine from uracil-55 in the psi GC loop of transfer RNAs. The sequence is that of tRNA pseudouridine synthase B from Bifidobacterium longum subsp. infantis (strain ATCC 15697 / DSM 20088 / JCM 1222 / NCTC 11817 / S12).